A 577-amino-acid polypeptide reads, in one-letter code: Protein O-linked-mannose beta-1,4-N-acetylglucosaminyltransferase 2 (577 aa).

Over 1 to 4 the chain is Cytoplasmic; it reads MNIA. The helical; Signal-anchor for type II membrane protein transmembrane segment at 5–25 threads the bilayer; the sequence is AVFNALLVSVLATVLWKYIKL. Residues 26–577 are Lumenal-facing; sequence REHAFMVEEE…PFADVLLCST (552 aa). N-linked (GlcNAc...) asparagine glycosylation is found at N98, N275, N335, and N540. One can recognise a Fibronectin type-III domain in the interval 481–577; that stretch reads KVRDARCQAS…PFADVLLCST (97 aa).

It belongs to the glycosyltransferase 61 family.

Its subcellular location is the endoplasmic reticulum membrane. It carries out the reaction 3-O-(alpha-D-mannosyl)-L-threonyl-[protein] + UDP-N-acetyl-alpha-D-glucosamine = 3-O-(N-acetyl-beta-D-glucosaminyl-(1-&gt;4)-alpha-D-mannosyl)-L-threonyl-[protein] + UDP + H(+). Its pathway is protein modification; protein glycosylation. Its function is as follows. O-linked mannose beta-1,4-N-acetylglucosaminyltransferase that transfers UDP-N-acetyl-D-glucosamine to the 4-position of the mannose to generate N-acetyl-D-glucosamine-beta-1,4-O-D-mannosylprotein. Involved in the biosynthesis of the phosphorylated O-mannosyl trisaccharide (N-acetylgalactosamine-beta-3-N-acetylglucosamine-beta-4-(phosphate-6-)mannose), a carbohydrate structure present in alpha-dystroglycan (DAG1), which is required for binding laminin G-like domain-containing extracellular proteins with high affinity. This Gallus gallus (Chicken) protein is Protein O-linked-mannose beta-1,4-N-acetylglucosaminyltransferase 2 (POMGNT2).